The sequence spans 264 residues: Zinc import ATP-binding protein ZnuC (264 aa).

Positions 11–226 constitute an ABC transporter domain; the sequence is IELKGVNVTF…PVFIRFFGNQ (216 aa). Position 43–50 (43–50) interacts with ATP; that stretch reads GPNGGGKS.

The protein belongs to the ABC transporter superfamily. Zinc importer (TC 3.A.1.15.5) family. The complex is composed of two ATP-binding proteins (ZnuC), two transmembrane proteins (ZnuB) and a solute-binding protein (ZnuA).

Its subcellular location is the cell inner membrane. It carries out the reaction Zn(2+)(out) + ATP(in) + H2O(in) = Zn(2+)(in) + ADP(in) + phosphate(in) + H(+)(in). Functionally, part of the ABC transporter complex ZnuABC involved in zinc import. Responsible for energy coupling to the transport system. The sequence is that of Zinc import ATP-binding protein ZnuC from Histophilus somni (strain 129Pt) (Haemophilus somnus).